The following is a 775-amino-acid chain: 1,4-alpha-glucan branching enzyme GlgB (775 aa).

A disordered region spans residues 1–39 (MTSVHDFATATRPATPSAAAQEPAPALPPGLDRNTLDAL). Low complexity predominate over residues 8–24 (ATATRPATPSAAAQEPA). Asp-454 (nucleophile) is an active-site residue. Glu-507 serves as the catalytic Proton donor.

Belongs to the glycosyl hydrolase 13 family. GlgB subfamily. In terms of assembly, monomer.

The enzyme catalyses Transfers a segment of a (1-&gt;4)-alpha-D-glucan chain to a primary hydroxy group in a similar glucan chain.. It functions in the pathway glycan biosynthesis; glycogen biosynthesis. Catalyzes the formation of the alpha-1,6-glucosidic linkages in glycogen by scission of a 1,4-alpha-linked oligosaccharide from growing alpha-1,4-glucan chains and the subsequent attachment of the oligosaccharide to the alpha-1,6 position. In Ralstonia nicotianae (strain ATCC BAA-1114 / GMI1000) (Ralstonia solanacearum), this protein is 1,4-alpha-glucan branching enzyme GlgB.